The primary structure comprises 594 residues: Dictomallein-4 (594 aa).

The N-terminal stretch at methionine 1–cysteine 18 is a signal peptide. The region spanning proline 147 to tyrosine 408 is the Peptidase M66 domain. Histidine 300 contributes to the Zn(2+) binding site. The active site involves glutamate 301. Histidine 304 and histidine 310 together coordinate Zn(2+).

Belongs to the dictomallein family. Requires Zn(2+) as cofactor.

The protein localises to the secreted. In Dictyostelium discoideum (Social amoeba), this protein is Dictomallein-4 (dtmlD).